We begin with the raw amino-acid sequence, 169 residues long: MRDAVTSLIKNYDVAGRYFDRNAIESLKSYFESGTQRVQAAKAINANAAAIVKQTGSKLFDEQPELIRPGGNAYTTRRYAACLRDLDYYLRYATYAIVAGSMDVLDERVLQGLRETYNSLGVPIGPTVRGIQIMKEIVKEQLGAAGIPNTSFVDEPFDYMTRELGEKDI.

The residue at position 72 (asparagine 72) is an N4-methylasparagine. Cysteine 82 serves as a coordination point for (2R,3E)-phycocyanobilin.

It belongs to the phycobiliprotein family. Heterodimer of an alpha and a beta chain. Contains one covalently linked bilin chromophore.

It localises to the cellular thylakoid membrane. Light-harvesting photosynthetic bile pigment-protein from the phycobiliprotein complex. This is a protein functionally equivalent to, but with weaker absorbance than, allophycocyanin beta chain. The sequence is that of Phycobiliprotein beta chain (apcD) from Mastigocladus laminosus (Fischerella sp.).